The chain runs to 559 residues: 2,3-bisphosphoglycerate-independent phosphoglycerate mutase (559 aa).

Mn(2+) contacts are provided by Asp28 and Ser81. Ser81 acts as the Phosphoserine intermediate in catalysis. Substrate contacts are provided by residues His140, 170–171 (RD), Arg206, Arg213, 286–289 (RADR), and Lys361. Positions 430, 434, 471, 472, and 501 each coordinate Mn(2+).

It belongs to the BPG-independent phosphoglycerate mutase family. Monomer. Mn(2+) serves as cofactor.

The protein resides in the cytoplasm. The catalysed reaction is (2R)-2-phosphoglycerate = (2R)-3-phosphoglycerate. It participates in carbohydrate degradation; glycolysis; pyruvate from D-glyceraldehyde 3-phosphate: step 3/5. Functionally, catalyzes the interconversion of 2-phosphoglycerate and 3-phosphoglycerate. In Mesembryanthemum crystallinum (Common ice plant), this protein is 2,3-bisphosphoglycerate-independent phosphoglycerate mutase (PGM1).